We begin with the raw amino-acid sequence, 192 residues long: Ion-translocating oxidoreductase complex subunit A (192 aa).

6 helical membrane passes run 5–25, 39–59, 65–85, 102–122, 134–154, and 171–191; these read LLLL…FLGL, IGMS…SYLV, LPFD…AVVV, ALGI…VALL, AIFG…FSAM, and AIAM…TGLV.

Belongs to the NqrDE/RnfAE family. The complex is composed of six subunits: RnfA, RnfB, RnfC, RnfD, RnfE and RnfG.

The protein resides in the cell inner membrane. Its function is as follows. Part of a membrane-bound complex that couples electron transfer with translocation of ions across the membrane. This Shewanella pealeana (strain ATCC 700345 / ANG-SQ1) protein is Ion-translocating oxidoreductase complex subunit A.